A 258-amino-acid polypeptide reads, in one-letter code: uncharacterized protein (258 aa).

One can recognise a Cyclin N-terminal domain in the interval 16–148 (EAFDSFEYAE…VLRALNFDTH (133 aa)).

Belongs to the cyclin family. Cyclin L subfamily.

It is found in the cytoplasm. The protein resides in the nucleus. This is an uncharacterized protein from Schizosaccharomyces pombe (strain 972 / ATCC 24843) (Fission yeast).